A 444-amino-acid chain; its full sequence is Transcriptional coactivator nsrH (444 aa).

Residues 74-144 enclose the HTH iclR-type domain; it reads ASQVSEILAC…ERDHVAHTPL (71 aa). The H-T-H motif DNA-binding region spans 104 to 123; the sequence is IKDIADLTNVPESRLRRIIR.

The protein resides in the nucleus. Its function is as follows. Transcriptional coactivator; part of the gene cluster that mediates the biosynthesis of the tetrahydroxanthone dimer neosartorin, which exhibits antibacterial activity. This is Transcriptional coactivator nsrH from Aspergillus novofumigatus (strain IBT 16806).